The sequence spans 370 residues: Histidinol-phosphate aminotransferase 2 (370 aa).

Lys-230 bears the N6-(pyridoxal phosphate)lysine mark.

The protein belongs to the class-II pyridoxal-phosphate-dependent aminotransferase family. Histidinol-phosphate aminotransferase subfamily. As to quaternary structure, homodimer. Pyridoxal 5'-phosphate is required as a cofactor.

It carries out the reaction L-histidinol phosphate + 2-oxoglutarate = 3-(imidazol-4-yl)-2-oxopropyl phosphate + L-glutamate. Its pathway is amino-acid biosynthesis; L-histidine biosynthesis; L-histidine from 5-phospho-alpha-D-ribose 1-diphosphate: step 7/9. In Pseudomonas fluorescens (strain Pf0-1), this protein is Histidinol-phosphate aminotransferase 2.